Reading from the N-terminus, the 163-residue chain is MEQNEFGLVEKIVYLNRVAKVVKGGRRFSFSALVVVGDAKGAVGFGLGKAQEVPEALRKATERAKKDMVQIPLVDGTLPYEILGEFGAGCVMLKPASKGTGIIAGGAVRAVMEAVGVTDVLAKAIGTNNPHNVLRATMAGLTSLRSAEYVSQLRGMKLEAPRK.

The S5 DRBM domain maps to 8–71 (LVEKIVYLNR…ERAKKDMVQI (64 aa)).

Belongs to the universal ribosomal protein uS5 family. As to quaternary structure, part of the 30S ribosomal subunit. Contacts proteins S4 and S8.

Functionally, with S4 and S12 plays an important role in translational accuracy. In terms of biological role, located at the back of the 30S subunit body where it stabilizes the conformation of the head with respect to the body. This is Small ribosomal subunit protein uS5 from Nitratidesulfovibrio vulgaris (strain DSM 19637 / Miyazaki F) (Desulfovibrio vulgaris).